The primary structure comprises 156 residues: Succinate dehydrogenase assembly factor 2-B, mitochondrial (156 aa).

The transit peptide at 1–24 (MLRQFIVSTVGRRLQLPMMAQSRL) directs the protein to the mitochondrion.

It belongs to the SDHAF2 family. Interacts with the flavoprotein subunit within the SDH catalytic dimer.

It is found in the mitochondrion matrix. Plays an essential role in the assembly of succinate dehydrogenase (SDH), an enzyme complex (also referred to as respiratory complex II) that is a component of both the tricarboxylic acid (TCA) cycle and the mitochondrial electron transport chain, and which couples the oxidation of succinate to fumarate with the reduction of ubiquinone (coenzyme Q) to ubiquinol. Required for flavinylation (covalent attachment of FAD) of the flavoprotein subunit of the SDH catalytic dimer. The sequence is that of Succinate dehydrogenase assembly factor 2-B, mitochondrial from Drosophila simulans (Fruit fly).